Reading from the N-terminus, the 472-residue chain is Eukaryotic translation initiation factor 2 subunit 3B (472 aa).

At Ala2 the chain carries N-acetylalanine. Ser16 bears the Phosphoserine mark. Positions 39–248 (QATINIGTIG…IVKKIPVPPR (210 aa)) constitute a tr-type G domain. The G1 stretch occupies residues 48 to 55 (GHVAHGKS). 51–56 (AHGKST) is a binding site for GTP. A G2 region spans residues 76–80 (NITIK). A G3 region spans residues 134–137 (DCPG). GTP-binding positions include 190-193 (NKID) and 225-227 (SAQ). Positions 190–193 (NKID) are G4. The segment at 225 to 227 (SAQ) is G5.

This sequence belongs to the TRAFAC class translation factor GTPase superfamily. Classic translation factor GTPase family. EIF2G subfamily. As to quaternary structure, eIF2 is a heterotrimer composed of an alpha, a beta and a gamma chain. eIF2 is member of the 43S pre-initiation complex (43S PIC). In terms of tissue distribution, specifically expressed in testis at the mRNA level.

The catalysed reaction is GTP + H2O = GDP + phosphate + H(+). Functionally, member of the eIF2 complex that functions in the early steps of protein synthesis by forming a ternary complex with GTP and initiator tRNA. This complex binds to a 40S ribosomal subunit, followed by mRNA binding to form the 43S pre-initiation complex (43S PIC). Junction of the 60S ribosomal subunit to form the 80S initiation complex is preceded by hydrolysis of the GTP bound to eIF2 and release of an eIF2-GDP binary complex. In order for eIF2 to recycle and catalyze another round of initiation, the GDP bound to eIF2 must exchange with GTP by way of a reaction catalyzed by eIF-2B. This Homo sapiens (Human) protein is Eukaryotic translation initiation factor 2 subunit 3B.